The following is a 317-amino-acid chain: UDP-3-O-acylglucosamine N-acyltransferase (317 aa).

Catalysis depends on His229, which acts as the Proton acceptor.

The protein belongs to the transferase hexapeptide repeat family. LpxD subfamily. In terms of assembly, homotrimer.

It carries out the reaction a UDP-3-O-[(3R)-3-hydroxyacyl]-alpha-D-glucosamine + a (3R)-hydroxyacyl-[ACP] = a UDP-2-N,3-O-bis[(3R)-3-hydroxyacyl]-alpha-D-glucosamine + holo-[ACP] + H(+). The protein operates within bacterial outer membrane biogenesis; LPS lipid A biosynthesis. Its function is as follows. Catalyzes the N-acylation of UDP-3-O-acylglucosamine using 3-hydroxyacyl-ACP as the acyl donor. Is involved in the biosynthesis of lipid A, a phosphorylated glycolipid that anchors the lipopolysaccharide to the outer membrane of the cell. This chain is UDP-3-O-acylglucosamine N-acyltransferase, found in Campylobacter concisus (strain 13826).